A 350-amino-acid polypeptide reads, in one-letter code: Probable dual-specificity RNA methyltransferase RlmN (350 aa).

Glu-93 serves as the catalytic Proton acceptor. A Radical SAM core domain is found at 99–327 (SSKRLTVCVS…VSVRYSRGVQ (229 aa)). The cysteines at positions 106 and 332 are disulfide-linked. The [4Fe-4S] cluster site is built by Cys-113, Cys-117, and Cys-120. S-adenosyl-L-methionine contacts are provided by residues 160–161 (GE), Ser-190, 213–215 (SLH), and Asn-289. Cys-332 (S-methylcysteine intermediate) is an active-site residue.

It belongs to the radical SAM superfamily. RlmN family. [4Fe-4S] cluster is required as a cofactor.

It localises to the cytoplasm. The catalysed reaction is adenosine(2503) in 23S rRNA + 2 reduced [2Fe-2S]-[ferredoxin] + 2 S-adenosyl-L-methionine = 2-methyladenosine(2503) in 23S rRNA + 5'-deoxyadenosine + L-methionine + 2 oxidized [2Fe-2S]-[ferredoxin] + S-adenosyl-L-homocysteine. It carries out the reaction adenosine(37) in tRNA + 2 reduced [2Fe-2S]-[ferredoxin] + 2 S-adenosyl-L-methionine = 2-methyladenosine(37) in tRNA + 5'-deoxyadenosine + L-methionine + 2 oxidized [2Fe-2S]-[ferredoxin] + S-adenosyl-L-homocysteine. Functionally, specifically methylates position 2 of adenine 2503 in 23S rRNA and position 2 of adenine 37 in tRNAs. This Synechocystis sp. (strain ATCC 27184 / PCC 6803 / Kazusa) protein is Probable dual-specificity RNA methyltransferase RlmN.